The chain runs to 144 residues: Ribosome maturation factor RimP (144 aa).

The protein belongs to the RimP family.

Its subcellular location is the cytoplasm. Required for maturation of 30S ribosomal subunits. This is Ribosome maturation factor RimP from Methylobacillus flagellatus (strain ATCC 51484 / DSM 6875 / VKM B-1610 / KT).